Consider the following 238-residue polypeptide: Thrombin-like enzyme collinein-1 (238 aa).

Residues 1-229 (VIGGDECNIN…HLDWIQNIIA (229 aa)) form the Peptidase S1 domain. Cystine bridges form between C7/C141, C28/C44, C78/C236, C120/C190, C152/C169, and C180/C205. Active-site charge relay system residues include H43 and D88. The active-site Charge relay system is the S184.

This sequence belongs to the peptidase S1 family. Snake venom subfamily. In terms of assembly, monomer. In terms of tissue distribution, expressed by the venom gland.

It localises to the secreted. Inhibited by Cu(2+) and, to a lesser extent, by Zn(2+) and Ba(2+). Not inhibited by Ca(2+) and Mg(2+). In terms of biological role, thrombin-like snake venom serine protease. Releases fibrinopeptide A and B in the conversion of fibrinogen to fibrin, with preferential activity on the alpha chain of fibrinogen. Also hydrolyzes N-p-toluensulfonyl arginine ester (TAME) and chromogenic artificial substrates of the blood coagulation cascade: S-2222 for factor Xa, S-2302 for kallikrein and S-2238 for thrombin. When tested in vitro, the recombinant protein does not degrade blood clots, suggesting that this toxin lacks fibrinolytic activity. In addition, it moderately inhibits human Kv10.1/KCNH1/EAG1 currents, with a mechanism independent of its enzymatic activity. It selectively blocks Kv10.1/KCNH1/EAG1 in a time and dose-dependent manner (IC(50)=4.2 uM for native protein and IC(50)=2.5 uM for recombinant protein). It may have a preference in interacting with Kv10.1/KCNH1/EAG1 in its closed state, since the inhibitory effect of the toxin is decreased at more depolarized potentials. Corroboratively, it may have possible antitumor applications, since it reduces the viability of human breast cancer cell line MCF-7, which strongly expresses Kv10.1/KCNH1/EAG1, but does not affect the liver carcinoma and the non-tumorigenic epithelial breast cell lines, which weakly express Kv10.1/KCNH1/EAG1. When tested on peripheral blood mononuclear cells (PBMC), the native protein shows mild cytotoxicity, whereas the recombinant protein does not show any cytotoxicity. Native form is not immununogenic, since it does not induce statistically significant antibody production in mice, whereas recombinant form shows an antibody titer slightly higher than the native form. In vivo, subplantar injection in mice paw induces a discreet paw edema. In addition, intraperitoneal injection of the recombinant protein into mice led to fibrinogen depletion, resulting in the blood incoagulability. In Crotalus durissus collilineatus (Brazilian rattlesnake), this protein is Thrombin-like enzyme collinein-1.